Consider the following 111-residue polypeptide: Shuttling pre-60S factor C23B6.02c (111 aa).

2 stretches are compositionally biased toward basic residues: residues 1–12 (MAKKQSIRSRNF) and 59–73 (SKKK…KKAK). Disordered regions lie at residues 1-25 (MAKK…DSST) and 47-111 (ALRS…QGDE). Over residues 83–111 (QAREERLDTKISKSLQKQEKLKARKQGDE) the composition is skewed to basic and acidic residues.

Belongs to the ECM1 family. In terms of assembly, associates with the pre-60S ribosomal particle and the nucleopore complex.

It localises to the nucleus. Its subcellular location is the nucleolus. It is found in the cytoplasm. Its function is as follows. Pre-ribosomal factor involved in 60S ribosomal protein subunit export from the nucleus. The chain is Shuttling pre-60S factor C23B6.02c from Schizosaccharomyces pombe (strain 972 / ATCC 24843) (Fission yeast).